The following is a 967-amino-acid chain: Leucine-rich repeat receptor-like protein kinase PXC2 (967 aa).

The N-terminal stretch at 1–20 (MFNGAVSLLFLFLAVVSARA) is a signal peptide. The Extracellular segment spans residues 21-609 (DPTFNDDVLG…QIRKSVLSIS (589 aa)). 11 LRR repeats span residues 91-114 (LQFL…EFPH), 115-139 (LGSL…FFEQ), 141-164 (GSLR…LSYC), 165-189 (STLT…WFLK), 191-212 (LKSL…LGGL), 214-236 (DLRH…IGRC), 237-260 (SSLK…MKSL), 262-284 (SCSS…IGDI), 285-307 (ATLE…SLGN), 308-332 (LEFL…LSNC), and 334-356 (NLIS…MFTG). N-linked (GlcNAc...) asparagine glycans are attached at residues Asn103 and Asn127. Residue Asn171 is glycosylated (N-linked (GlcNAc...) asparagine). N-linked (GlcNAc...) asparagine glycosylation is present at Asn219. N-linked (GlcNAc...) asparagine glycosylation is found at Asn296, Asn315, and Asn331. Asn374 is a glycosylation site (N-linked (GlcNAc...) asparagine). LRR repeat units lie at residues 384-408 (LQGL…IWIL), 410-432 (SLLQ…IGGL), 433-456 (KVAE…IGGA), 457-480 (VSLK…ISNC), 482-503 (ALNT…SIGS), 504-528 (LSNL…IEKL), and 530-552 (HLLT…GFFN). N-linked (GlcNAc...) asparagine glycosylation is found at Asn415, Asn446, Asn479, Asn487, Asn516, Asn535, Asn540, Asn571, and Asn587. The chain crosses the membrane as a helical span at residues 610-630 (ALIAIGAAAVIAIGVVAVTLL). Topologically, residues 631–967 (NVHARSSVSR…LIQCPSHDLE (337 aa)) are cytoplasmic. In terms of domain architecture, Protein kinase spans 687–959 (LNKDSELGRG…EEVVKILELI (273 aa)). ATP-binding positions include 693–701 (LGRGGFGVV) and Lys715.

The protein belongs to the protein kinase superfamily. Ser/Thr protein kinase family. Expressed in the vascular strands of cotyledons, the shoot apex, hypocotyls, roots, leaves, stems and flowers.

The protein resides in the cell membrane. In terms of biological role, leucine-rich repeat receptor-like protein kinase that may play a role in vascular tissues development. This Arabidopsis thaliana (Mouse-ear cress) protein is Leucine-rich repeat receptor-like protein kinase PXC2.